The primary structure comprises 852 residues: Leucine--tRNA ligase (852 aa).

Residues 42–52 carry the 'HIGH' region motif; the sequence is PYPSGKLHMGH. Residues 586-606 are disordered; sequence NKYVPADQVDPNDPKDPETGE. Residues 614–618 carry the 'KMSKS' region motif; it reads KMSKS. Residue lysine 617 participates in ATP binding.

It belongs to the class-I aminoacyl-tRNA synthetase family.

The protein localises to the cytoplasm. It carries out the reaction tRNA(Leu) + L-leucine + ATP = L-leucyl-tRNA(Leu) + AMP + diphosphate. The chain is Leucine--tRNA ligase from Picosynechococcus sp. (strain ATCC 27264 / PCC 7002 / PR-6) (Agmenellum quadruplicatum).